We begin with the raw amino-acid sequence, 373 residues long: Chorismate synthase (373 aa).

NADP(+) is bound by residues Arg48 and Arg54. FMN is bound by residues 131 to 133, 243 to 244, Gly288, 303 to 307, and Arg329; these read RSS, NA, and KPTSS.

The protein belongs to the chorismate synthase family. Homotetramer. The cofactor is FMNH2.

It carries out the reaction 5-O-(1-carboxyvinyl)-3-phosphoshikimate = chorismate + phosphate. The protein operates within metabolic intermediate biosynthesis; chorismate biosynthesis; chorismate from D-erythrose 4-phosphate and phosphoenolpyruvate: step 7/7. Catalyzes the anti-1,4-elimination of the C-3 phosphate and the C-6 proR hydrogen from 5-enolpyruvylshikimate-3-phosphate (EPSP) to yield chorismate, which is the branch point compound that serves as the starting substrate for the three terminal pathways of aromatic amino acid biosynthesis. This reaction introduces a second double bond into the aromatic ring system. In Beijerinckia indica subsp. indica (strain ATCC 9039 / DSM 1715 / NCIMB 8712), this protein is Chorismate synthase.